Reading from the N-terminus, the 414-residue chain is NFATC2-interacting protein (414 aa).

The segment at 1 to 42 (MAEPLRRRGPRSRGGRASRGARRARAARGRCPRAPRSPTRLI) is disordered. Basic residues predominate over residues 7–33 (RRGPRSRGGRASRGARRARAARGRCPR). Phosphoserine is present on residues serine 52 and serine 54. The tract at residues 63 to 118 (ADPGEVPVARLPAPAAPEQDSDSDSEGAAEGPAGAPRTLVRRRRRLLDPGEAPVVP) is disordered. The segment covering 68-79 (VPVARLPAPAAP) has biased composition (low complexity). 3 positions are modified to phosphoserine: serine 83, serine 85, and serine 87. The segment covering 90 to 100 (AAEGPAGAPRT) has biased composition (low complexity). At serine 121 the chain carries Phosphoserine. Lysine 123 participates in a covalent cross-link: Glycyl lysine isopeptide (Lys-Gly) (interchain with G-Cter in SUMO2). Residues 139–208 (KLCPSEPEDE…SSRNKSRKHT (70 aa)) are disordered. A coiled-coil region spans residues 170-229 (KKKLRKKHEKEEKKMEEFPDQDISPLPQPSSRNKSRKHTEALQKLREVNKRLQDLRSCLS). A phosphoserine mark is found at serine 193, serine 199, and serine 309. Threonine 311 and threonine 313 each carry phosphothreonine. The Ubiquitin-like domain maps to 343-414 (LRLRVQGKEK…ESGDLIEVWG (72 aa)). 2 positions are modified to phosphoserine: serine 364 and serine 385.

Interacts with NFATC2, TRAF1, TRAF2 and PRMT1. Interacts with UBE2I/UBC9. Post-translationally, methylation at the N-terminus by PRMT1 modulates interaction with the NFAT complex and results in augmented cytokine production.

It is found in the nucleus. The protein localises to the cytoplasm. Functionally, in T-helper 2 (Th2) cells, regulates the magnitude of NFAT-driven transcription of a specific subset of cytokine genes, including IL3, IL4, IL5 and IL13, but not IL2. Recruits PRMT1 to the IL4 promoter; this leads to enhancement of histone H4 'Arg-3'-methylation and facilitates subsequent histone acetylation at the IL4 locus, thus promotes robust cytokine expression. Down-regulates formation of poly-SUMO chains by UBE2I/UBC9. In Rattus norvegicus (Rat), this protein is NFATC2-interacting protein (Nfatc2ip).